Consider the following 610-residue polypeptide: MIKNIFQSRKLSGLCVLSILLVSVTILLLTNDTIDLFPYLSLPYLPRSSLSVIPTSTPISSPTNDSSPPLESPVNQTRVDDHPDDQGLELDWLKDDKQWNVSLKIDWKRCESPDYIPCLDNTKAIKKLKSKRNMEHRERHCPERSPKCLVPLPQHYKVPLPWPQSRDMIWYDNVPHPKLVEYKKDQNWVRKSGPFFVFPGGGTQFKDGVIHYINFIQKTLPILDWGKKVRVVLDVGCGVASFGGTLLDKNVITMSFAPKDEHEAQIQFALERGIPATLAVIGTQKLPFPDNAYDVIHCARCRVHWHGYGGRPLLELNRVLRPGGFFVWSATPVYQHDEGHRNVWKTMESLTTSMCWKVVARTRFTKVGFVIYQKPDSDSCYESRKNKDPPLCIEEETKKNSSWYTPLLTCLPKLPVSPIGKWPSGWPERLTETPVSLFREQRSEESFREDSKLWSGVMSNIYLYSLAINWTRIHNVMDMNAGYGGFAAALINKPLWVMNVIPVEGEDTLSTIFDRGLIGIYHDWCESFNTYPRSYDLLHSSFLFTNLSQRCDLMEVVVEIDRILRPGGYLAVQDTVEMLKKLNPILLSLRWSTNLYRGKFLVGLKSSWRP.

At 1 to 10 (MIKNIFQSRK) the chain is on the cytoplasmic side. The chain crosses the membrane as a helical; Signal-anchor for type II membrane protein span at residues 11 to 31 (LSGLCVLSILLVSVTILLLTN). Residues 32–610 (DTIDLFPYLS…LVGLKSSWRP (579 aa)) are Lumenal-facing. Low complexity predominate over residues 56-69 (STPISSPTNDSSPP). The segment at 56–81 (STPISSPTNDSSPPLESPVNQTRVDD) is disordered. N-linked (GlcNAc...) asparagine glycans are attached at residues Asn-64, Asn-75, Asn-100, Asn-400, Asn-469, and Asn-546.

This sequence belongs to the methyltransferase superfamily.

The protein resides in the endoplasmic reticulum membrane. The polypeptide is Probable methyltransferase PMT22 (Arabidopsis thaliana (Mouse-ear cress)).